We begin with the raw amino-acid sequence, 186 residues long: Ribosome-recycling factor (186 aa).

Belongs to the RRF family.

It localises to the cytoplasm. Responsible for the release of ribosomes from messenger RNA at the termination of protein biosynthesis. May increase the efficiency of translation by recycling ribosomes from one round of translation to another. This Azorhizobium caulinodans (strain ATCC 43989 / DSM 5975 / JCM 20966 / LMG 6465 / NBRC 14845 / NCIMB 13405 / ORS 571) protein is Ribosome-recycling factor.